A 233-amino-acid polypeptide reads, in one-letter code: Large ribosomal subunit protein uL1 (233 aa).

It belongs to the universal ribosomal protein uL1 family. In terms of assembly, part of the 50S ribosomal subunit.

Its function is as follows. Binds directly to 23S rRNA. The L1 stalk is quite mobile in the ribosome, and is involved in E site tRNA release. In terms of biological role, protein L1 is also a translational repressor protein, it controls the translation of the L11 operon by binding to its mRNA. This Hamiltonella defensa subsp. Acyrthosiphon pisum (strain 5AT) protein is Large ribosomal subunit protein uL1.